A 45-amino-acid chain; its full sequence is Large ribosomal subunit protein bL36 (45 aa).

Belongs to the bacterial ribosomal protein bL36 family.

The chain is Large ribosomal subunit protein bL36 from Psychrobacter sp. (strain PRwf-1).